Consider the following 663-residue polypeptide: MKAVVFAYHDIGCTGIEALLEAGYEIQAVFTHADDPSENRFFGSVAQLCAEHGLPVYSPEDVNHPLWVEHIKGLAPQALFSFYYRHMLKQEILDIPSAGAFNLHGSLLPAYRGRAPINWCLVNGEQLTGITLHQMTMRPDAGAIVAQQAVAIKWADTALTLHGKVRLAAKALLDAELPKLRTGDISLTPQDESRASYYGRRTPADGELHWDKSARDLYNLVRAVTQPYPGAFSFAGDRKLTVWKATHIAQDSDMLPGTILSQDPLRIACGEGVLEIVAGQAEGGLYVRGAQLARELGLVAGMRLGAKASSALRKERLTRVLILGVNGFIGNHLTERLLKDGRYEIYGLDISASALGRFIDHPHFHFVEGDISIHTEWIEYHIKKCDVILPLVAIATPIEYTRNPLRVFELDFEENLKIVRYCVKYNKRIIFPSTSEVYGMCDDHSFDEDESRLIVGPIHKQRWIYSVSKQLLDRVIWAYGKKEGLNFTLFRPFNWMGPRLDSLDSARIGSSRAITQLILNLVDGTPIQLVDGGAQKRCFTDIEDGIEALFRIIENKGNRCDGQIINIGSPDNEASILQMAEVLLGKFEAHPLRHHFPPFAGFKRVESKSFYGDGYQDVSHRRPSIKNARRLLDWEPTIEMEETIGKTLDFFLQGAVSTGVEHD.

Residues 1–304 (MKAVVFAYHD…ELGLVAGMRL (304 aa)) are formyltransferase ArnAFT. The active-site Proton donor; for formyltransferase activity is H104. (6R)-10-formyltetrahydrofolate-binding positions include R114 and 136-140 (TMRPD). The dehydrogenase ArnADH stretch occupies residues 316–663 (RLTRVLILGV…GAVSTGVEHD (348 aa)). Residues D349 and 370-371 (DI) each bind NAD(+). UDP-alpha-D-glucuronate is bound by residues A395, Y400, and 434–435 (TS). Catalysis depends on E436, which acts as the Proton acceptor; for decarboxylase activity. UDP-alpha-D-glucuronate-binding positions include R462, N494, 528–537 (QLVDGGAQKR), and Y615. Catalysis depends on R621, which acts as the Proton donor; for decarboxylase activity.

It in the N-terminal section; belongs to the Fmt family. UDP-L-Ara4N formyltransferase subfamily. In the C-terminal section; belongs to the NAD(P)-dependent epimerase/dehydratase family. UDP-glucuronic acid decarboxylase subfamily. Homohexamer, formed by a dimer of trimers.

It carries out the reaction UDP-alpha-D-glucuronate + NAD(+) = UDP-beta-L-threo-pentopyranos-4-ulose + CO2 + NADH. The enzyme catalyses UDP-4-amino-4-deoxy-beta-L-arabinose + (6R)-10-formyltetrahydrofolate = UDP-4-deoxy-4-formamido-beta-L-arabinose + (6S)-5,6,7,8-tetrahydrofolate + H(+). The protein operates within nucleotide-sugar biosynthesis; UDP-4-deoxy-4-formamido-beta-L-arabinose biosynthesis; UDP-4-deoxy-4-formamido-beta-L-arabinose from UDP-alpha-D-glucuronate: step 1/3. It functions in the pathway nucleotide-sugar biosynthesis; UDP-4-deoxy-4-formamido-beta-L-arabinose biosynthesis; UDP-4-deoxy-4-formamido-beta-L-arabinose from UDP-alpha-D-glucuronate: step 3/3. It participates in bacterial outer membrane biogenesis; lipopolysaccharide biosynthesis. Bifunctional enzyme that catalyzes the oxidative decarboxylation of UDP-glucuronic acid (UDP-GlcUA) to UDP-4-keto-arabinose (UDP-Ara4O) and the addition of a formyl group to UDP-4-amino-4-deoxy-L-arabinose (UDP-L-Ara4N) to form UDP-L-4-formamido-arabinose (UDP-L-Ara4FN). The modified arabinose is attached to lipid A and is required for resistance to polymyxin and cationic antimicrobial peptides. This Aeromonas salmonicida (strain A449) protein is Bifunctional polymyxin resistance protein ArnA.